The chain runs to 353 residues: MGCGASKVDKEGQARNDAIDAQLKKDRLAQKNEIKMLLLGAGESGKSTILKQMKLINHGSYSAEERESYKEIIFSNTVQSMRVLLDAMERLDIPLADATNAPRAEIILGLSPSIESSVLPRQVADAIHALWGDAGVQACFGRSREYQLNDSAKYYFDSIQRMAEPSYLPTDQDVLRSRVKTTGITETHFKIGELNYKLFDVGGQRSERKKWIHCFENVTAIIFLVAISEYDQLLYEDENVNRMQEALTLFDSICNSRWFVKTSIILFLNKIDLFKQKLPISPMADYFSDYTGGADYNSASEYIVNRFVSLNQSDAKTIYTHFTCATDTSQIKFVMSAVNDIIIQVNLRDCGLL.

Gly-2 carries N-myristoyl glycine lipidation. Cys-3 carries the S-palmitoyl cysteine lipid modification. Residues 32–353 form the G-alpha domain; that stretch reads NEIKMLLLGA…QVNLRDCGLL (322 aa). Residues 35-48 are G1 motif; sequence KMLLLGAGESGKST. GTP contacts are provided by Glu-43, Ser-44, Gly-45, Lys-46, Ser-47, Thr-48, Asp-150, Leu-175, Thr-181, Gly-203, Asn-269, Lys-270, Asp-272, and Ala-325. A Mg(2+)-binding site is contributed by Ser-47. The interval 173–181 is G2 motif; it reads DVLRSRVKT. Thr-181 lines the Mg(2+) pocket. The segment at 196-205 is G3 motif; the sequence is YKLFDVGGQR. The tract at residues 265-272 is G4 motif; sequence ILFLNKID. The interval 323–328 is G5 motif; sequence TCATDT.

The protein belongs to the G-alpha family. G proteins are composed of 3 units; alpha, beta and gamma. The alpha chain contains the guanine nucleotide binding site. Mg(2+) serves as cofactor.

In terms of biological role, guanine nucleotide-binding proteins (G proteins) are involved as modulators or transducers in various transmembrane signaling systems. This is Guanine nucleotide-binding protein alpha-1 subunit (GPA1) from Mycosarcoma maydis (Corn smut fungus).